A 320-amino-acid polypeptide reads, in one-letter code: ATP-dependent 6-phosphofructokinase (320 aa).

Gly12 provides a ligand contact to ATP. ADP is bound by residues 22–26 (RGVVR) and 55–60 (RYSVSD). Residues 73 to 74 (RF) and 103 to 106 (GDGS) each bind ATP. Asp104 contributes to the Mg(2+) binding site. Residue 126–128 (TID) participates in substrate binding. Asp128 acts as the Proton acceptor in catalysis. Position 155 (Arg155) interacts with ADP. Substrate is bound by residues Arg163 and 170–172 (MGR). Residues 186-188 (GCE), Lys212, and 214-216 (KKH) contribute to the ADP site. Residues Glu223, Arg244, and 250–253 (HIQR) each bind substrate.

This sequence belongs to the phosphofructokinase type A (PFKA) family. ATP-dependent PFK group I subfamily. Prokaryotic clade 'B1' sub-subfamily. As to quaternary structure, homotetramer. Requires Mg(2+) as cofactor.

The protein localises to the cytoplasm. It carries out the reaction beta-D-fructose 6-phosphate + ATP = beta-D-fructose 1,6-bisphosphate + ADP + H(+). It participates in carbohydrate degradation; glycolysis; D-glyceraldehyde 3-phosphate and glycerone phosphate from D-glucose: step 3/4. With respect to regulation, allosterically activated by ADP and other diphosphonucleosides, and allosterically inhibited by phosphoenolpyruvate. Its function is as follows. Catalyzes the phosphorylation of D-fructose 6-phosphate to fructose 1,6-bisphosphate by ATP, the first committing step of glycolysis. In Pectobacterium carotovorum subsp. carotovorum (strain PC1), this protein is ATP-dependent 6-phosphofructokinase.